We begin with the raw amino-acid sequence, 587 residues long: MDRNSVIGFSLIAVIMIVWLQFMKPEQKTMLDPVPPSREMVQKDAAENAPASAAPETAAESLGSFAKASTGTEQIITVDNDLFTAELSSKGATLKSMVLKKHLDVNGKPFNLISEKNKGALSMLFLSNDGKRIDTRDLYFRSLDTKKSETVTGKEKLSVSFVLDVDASRSMQVTYTFTGDSYVIDYDLKLNGFGSTLAGNEYQLDWDGGLVYSEKDTADESHNAISSAYLGGGLLKLDAKDSKKRYQEEESGKAEWVAVRNKYFVAAMIPERETEGVFLQGTKKDGVDFENYTAALKMMIPAGQNSVTDRYRLYVGPLDYNTVRSLHVDLEKIMDFGWDWLTRPFAEYLILPIFNWMNKYVTNYGLIIIIFAFLIKTVTWPLSLASTKSMKKMSALQPMMKEIQEKYKNDPAKLQSELGRIYKEAGVNPLGGCLPTVIQMPLLFAMFYVFRSSIQLRQHGFLWVKDLSVPDSILDFGFKLPLYGDHIALMPILMAVTVFFQQKITPTTQTNDQMKIMIWMFPAMMLLFFNNMPSGLALYYLMFNVFSIAQQAYINATVSDEDKAAAAMQVAASASPSKGAKKGGKKK.

The next 5 helical transmembrane spans lie at 5-25, 365-385, 430-450, 480-500, and 516-536; these read SVIG…FMKP, GLII…LSLA, LGGC…FYVF, LPLY…TVFF, and IMIW…PSGL.

It belongs to the OXA1/ALB3/YidC family. Type 1 subfamily. Interacts with the Sec translocase complex via SecD. Specifically interacts with transmembrane segments of nascent integral membrane proteins during membrane integration.

The protein localises to the cell inner membrane. Required for the insertion and/or proper folding and/or complex formation of integral membrane proteins into the membrane. Involved in integration of membrane proteins that insert both dependently and independently of the Sec translocase complex, as well as at least some lipoproteins. Aids folding of multispanning membrane proteins. This is Membrane protein insertase YidC from Chlorobaculum parvum (strain DSM 263 / NCIMB 8327) (Chlorobium vibrioforme subsp. thiosulfatophilum).